We begin with the raw amino-acid sequence, 385 residues long: Meiotic recombination protein SPO11-2 (385 aa).

A Topo IIA-type catalytic domain is found at 24-169 (LPPAEVRARI…LGIMASSRGA (146 aa)). Catalysis depends on Tyr126, which acts as the O-(5'-phospho-DNA)-tyrosine intermediate. Mg(2+) contacts are provided by Glu219 and Asp272.

This sequence belongs to the TOP6A family. In terms of assembly, interacts with TOP6B. Mg(2+) serves as cofactor.

Its subcellular location is the nucleus. It catalyses the reaction ATP-dependent breakage, passage and rejoining of double-stranded DNA.. Its function is as follows. Required for meiotic recombination. Mediates DNA cleavage that forms the double-strand breaks (DSB) that initiate meiotic recombination. This Oryza sativa subsp. japonica (Rice) protein is Meiotic recombination protein SPO11-2 (SPO11-2).